Here is a 115-residue protein sequence, read N- to C-terminus: Evasin P1183 (115 aa).

Positions 1 to 25 (MTRNWSFRVIFVSAMWCALLKFATL) are cleaved as a signal peptide. 4 cysteine pairs are disulfide-bonded: cysteine 38–cysteine 58, cysteine 54–cysteine 94, cysteine 70–cysteine 99, and cysteine 89–cysteine 108. N-linked (GlcNAc...) asparagine glycosylation is found at asparagine 45, asparagine 72, and asparagine 103.

The protein resides in the secreted. Its function is as follows. Salivary chemokine-binding protein which binds to host chemokine CCL2. The chain is Evasin P1183 from Amblyomma triste (Neotropical tick).